The primary structure comprises 260 residues: ATP synthase subunit a (260 aa).

Residues 1–11 (MQNTLLRTYIN) constitute a propeptide, removed in mature form. Transmembrane regions (helical) follow at residues 37–57 (ITTFTLYTIIVLLVVSSLYVL), 96–116 (YFPFIYTLFMFILISNLISMI), 126–146 (FVFIISLSMIIWLGITILSLF), 152–172 (FFSLFVPSGTALPLVPLLVVI), 192–212 (IFSGHLLMAILAGLTMTFVQI), and 217–237 (LILGFIPLAIILIIMCLEFGI).

The protein belongs to the ATPase A chain family. In terms of assembly, F-type ATPases have 2 components, CF(1) - the catalytic core - and CF(0) - the membrane proton channel. CF(1) has five subunits: alpha(3), beta(3), gamma(1), delta(1), epsilon(1). CF(0) has three main subunits: a, b and c.

It is found in the mitochondrion inner membrane. Mitochondrial membrane ATP synthase (F(1)F(0) ATP synthase or Complex V) produces ATP from ADP in the presence of a proton gradient across the membrane which is generated by electron transport complexes of the respiratory chain. F-type ATPases consist of two structural domains, F(1) - containing the extramembraneous catalytic core and F(0) - containing the membrane proton channel, linked together by a central stalk and a peripheral stalk. During catalysis, ATP synthesis in the catalytic domain of F(1) is coupled via a rotary mechanism of the central stalk subunits to proton translocation. Key component of the proton channel; it may play a direct role in the translocation of protons across the membrane. The polypeptide is ATP synthase subunit a (ATP6) (Candida glabrata (strain ATCC 2001 / BCRC 20586 / JCM 3761 / NBRC 0622 / NRRL Y-65 / CBS 138) (Yeast)).